We begin with the raw amino-acid sequence, 343 residues long: Protein FAM50A-B (343 aa).

Disordered stretches follow at residues 1 to 25 (MAQYKGAASEAGRAMQLMKKREKQR) and 125 to 181 (EEDE…EEEN). Over residues 125 to 142 (EEDEECEDEESEEEEEEY) the composition is skewed to acidic residues. Residues 172-181 (PDRDREEEEN) show a composition bias toward basic and acidic residues.

This sequence belongs to the FAM50 family.

The protein resides in the nucleus. Probably involved in the regulation of pre-mRNA splicing. This is Protein FAM50A-B (fam50a-b) from Xenopus laevis (African clawed frog).